The following is a 236-amino-acid chain: MIEQQQFGQSRICYDSEWVSSPELALFDPQYWQAQNKVVGSATGRGTTWFVQLPKITAALRHYRRGGLFGKLVKDHYWFQSWSATRSFAEFHLLKQLREAGVNVPRPIAAYAMRKGLFYQADLLSERIANAQDLVTILQKHSLSAELYQKIGVEIAKMHRVGVNHTDLNIHNILIDAQETIWIIDFDKCYPQAGDGWKQENLDRLKRSFNKERVKRSIHWHDKDFHALLTGYESQQ.

Asp167 is an active-site residue.

The protein belongs to the protein kinase superfamily. KdkA/RfaP family.

It is found in the cell inner membrane. The catalysed reaction is an alpha-Kdo-(2-&gt;6)-lipid IVA + ATP = a 4-O-phospho-alpha-Kdo-(2-&gt;6)-lipid IVA + ADP + H(+). It functions in the pathway bacterial outer membrane biogenesis; LPS core biosynthesis. Its function is as follows. Catalyzes the ATP-dependent phosphorylation of the 3-deoxy-D-manno-octulosonic acid (Kdo) residue in Kdo-lipid IV(A) at the 4-OH position. The protein is 3-deoxy-D-manno-octulosonic acid kinase of Vibrio vulnificus (strain CMCP6).